The primary structure comprises 1130 residues: DNA-directed RNA polymerase I subunit rpa2 (1130 aa).

Residues 1070–1096 form a C4-type zinc finger; the sequence is CKLCGSTLTIYSKKDYSNQTVSECKSC.

Belongs to the RNA polymerase beta chain family. In terms of assembly, component of the RNA polymerase I (Pol I) complex consisting of 14 subunits.

The protein localises to the nucleus. Its subcellular location is the nucleolus. It carries out the reaction RNA(n) + a ribonucleoside 5'-triphosphate = RNA(n+1) + diphosphate. In terms of biological role, DNA-dependent RNA polymerase catalyzes the transcription of DNA into RNA using the four ribonucleoside triphosphates as substrates. Second largest core component of RNA polymerase I which synthesizes ribosomal RNA precursors. Proposed to contribute to the polymerase catalytic activity and forms the polymerase active center together with the largest subunit. Pol I is composed of mobile elements and RPA2 is part of the core element with the central large cleft and probably a clamp element that moves to open and close the cleft. This is DNA-directed RNA polymerase I subunit rpa2 (polr1b) from Dictyostelium discoideum (Social amoeba).